The chain runs to 145 residues: MRALIQRVTEASVRVEGAVIGRTGPGLLVLVCGMPGDTDRSVAALAGKIAKLRIFRDAEGRMNRSLLDVGGGALVVSQFTLAADTSRGNRPGFSAAAPPKEGERLYEAFAAALAETGVAVETGRFGANMAVALVNDGPVTIWMEG.

The Gly-cisPro motif, important for rejection of L-amino acids signature appears at 137-138 (GP).

It belongs to the DTD family. In terms of assembly, homodimer.

It localises to the cytoplasm. The catalysed reaction is glycyl-tRNA(Ala) + H2O = tRNA(Ala) + glycine + H(+). It carries out the reaction a D-aminoacyl-tRNA + H2O = a tRNA + a D-alpha-amino acid + H(+). Its function is as follows. An aminoacyl-tRNA editing enzyme that deacylates mischarged D-aminoacyl-tRNAs. Also deacylates mischarged glycyl-tRNA(Ala), protecting cells against glycine mischarging by AlaRS. Acts via tRNA-based rather than protein-based catalysis; rejects L-amino acids rather than detecting D-amino acids in the active site. By recycling D-aminoacyl-tRNA to D-amino acids and free tRNA molecules, this enzyme counteracts the toxicity associated with the formation of D-aminoacyl-tRNA entities in vivo and helps enforce protein L-homochirality. This Dinoroseobacter shibae (strain DSM 16493 / NCIMB 14021 / DFL 12) protein is D-aminoacyl-tRNA deacylase.